Reading from the N-terminus, the 164-residue chain is uncharacterized protein (164 aa).

Positions 1–18 (MILILTIIVGFLIYFVTA) are cleaved as a signal peptide. A glycan (N-linked (GlcNAc...) asparagine; by host) is linked at asparagine 88.

It belongs to the IIV-6 357R family.

This is an uncharacterized protein from Acheta domesticus (House cricket).